Consider the following 373-residue polypeptide: Filamin-binding LIM protein 1 (373 aa).

The interval 1–70 is filamin-binding; the sequence is MASKPEKRVA…SPWTTPGRAA (70 aa). Disordered regions lie at residues 41-119 and 135-176; these read RPWE…PSEE and QLHL…PVEK. Residues 104 to 114 are compositionally biased toward pro residues; sequence LPPPPPPPPVL. 3 consecutive LIM zinc-binding domains span residues 181–242, 243–300, and 301–370; these read DICA…TLER, CGKC…RKFA, and PVCS…RSAA. Residues 276 to 373 are FERMT2-binding; that stretch reads IGDESFALGS…HVKRSAAGCC (98 aa).

Interacts with NKX2-5. Isoform 1 and isoform 3 interact with FERMT2, FLNA, FLNB and FLNC. Isoform 2 interacts with FLNB. In terms of tissue distribution, isoform 1 and isoform 3 are expressed in heart, kidney, lung, pancreas, placenta and platelets. Isoform 2 is expressed in brain, heart, kidney, lung, pancreas, placenta, skeletal muscle and platelets.

The protein resides in the cell junction. It is found in the focal adhesion. Its subcellular location is the cytoplasm. It localises to the cytoskeleton. The protein localises to the stress fiber. Functionally, serves as an anchoring site for cell-ECM adhesion proteins and filamin-containing actin filaments. Is implicated in cell shape modulation (spreading) and motility. May participate in the regulation of filamin-mediated cross-linking and stabilization of actin filaments. May also regulate the assembly of filamin-containing signaling complexes that control actin assembly. Promotes dissociation of FLNA from ITGB3 and ITGB7. Promotes activation of integrins and regulates integrin-mediated cell-cell adhesion. The sequence is that of Filamin-binding LIM protein 1 (FBLIM1) from Homo sapiens (Human).